We begin with the raw amino-acid sequence, 622 residues long: Leucine-rich repeat and immunoglobulin-like domain-containing nogo receptor-interacting protein 1-B (622 aa).

The N-terminal stretch at 1 to 43 is a signal peptide; it reads MTFLQVTIKMVAREASGHSYLVACWQPILILMLGTVLSGSATG. 2 cysteine pairs are disulfide-bonded: C44-C50 and C48-C59. The region spanning 44–73 is the LRRNT domain; the sequence is CPSRCECSAQERSVVCHRRKLITLPEGIPI. The Extracellular portion of the chain corresponds to 44 to 563; it reads CPSRCECSAQ…FDMKTLIIAT (520 aa). 11 LRR repeats span residues 74–95, 98–119, 122–143, 146–167, 170–191, 194–215, 218–239, 266–287, 290–311, 314–335, and 338–359; these read DTRL…EFLN, QLED…AFSN, GLRT…VFTG, NLTR…MFQE, NLKE…AFHG, SLEQ…AFSH, NLLT…SFRR, NITT…AIQH, YLRF…KMHN, RLQA…SFKG, and YLRV…AFHS. A glycan (N-linked (GlcNAc...) asparagine) is linked at N146. N-linked (GlcNAc...) asparagine glycosylation is present at N204. N266, N276, and N295 each carry an N-linked (GlcNAc...) asparagine glycan. A glycan (N-linked (GlcNAc...) asparagine) is linked at N343. An LRRCT domain is found at 371-425; it reads NPLACDCRLLWVFRRRWRLNFNRQQPSCETPEFLQGKEFKDFPDVLPPNYFTCQK. Disulfide bonds link C375-C398, C377-C423, and C448-C499. One can recognise an Ig-like C2-type domain in the interval 413-515; that stretch reads PDVLPPNYFT…GNDTRLAHLH (103 aa). N-linked (GlcNAc...) asparagine glycosylation is found at N494, N507, N528, and N544. A helical transmembrane segment spans residues 564-584; that stretch reads TMGFISFLGVVLFCLVLLFLW. Over 585–622 the chain is Cytoplasmic; sequence SRGKGNAKPNIEIEYVPRKVDGENSPNEGSHKISMKMI.

The protein resides in the cell membrane. In terms of biological role, may play a role in regulating axonal regeneration and plasticity in the adult central nervous system. This chain is Leucine-rich repeat and immunoglobulin-like domain-containing nogo receptor-interacting protein 1-B (lingo1b), found in Danio rerio (Zebrafish).